Reading from the N-terminus, the 253-residue chain is Tryptophan synthase alpha chain (253 aa).

Catalysis depends on proton acceptor residues glutamate 47 and aspartate 58.

The protein belongs to the TrpA family. Tetramer of two alpha and two beta chains.

It catalyses the reaction (1S,2R)-1-C-(indol-3-yl)glycerol 3-phosphate + L-serine = D-glyceraldehyde 3-phosphate + L-tryptophan + H2O. Its pathway is amino-acid biosynthesis; L-tryptophan biosynthesis; L-tryptophan from chorismate: step 5/5. Its function is as follows. The alpha subunit is responsible for the aldol cleavage of indoleglycerol phosphate to indole and glyceraldehyde 3-phosphate. In Lactococcus lactis subsp. lactis (strain IL1403) (Streptococcus lactis), this protein is Tryptophan synthase alpha chain.